Here is a 206-residue protein sequence, read N- to C-terminus: Small ribosomal subunit protein uS3 (206 aa).

Residues 39–107 (IRSYINESFK…SVEVNVVGVK (69 aa)) enclose the KH type-2 domain.

This sequence belongs to the universal ribosomal protein uS3 family. Part of the 30S ribosomal subunit. Forms a tight complex with proteins S10 and S14.

Functionally, binds the lower part of the 30S subunit head. Binds mRNA in the 70S ribosome, positioning it for translation. This chain is Small ribosomal subunit protein uS3, found in Wolbachia pipientis subsp. Culex pipiens (strain wPip).